Here is a 209-residue protein sequence, read N- to C-terminus: V-type ATP synthase subunit D (209 aa).

This sequence belongs to the V-ATPase D subunit family.

Its function is as follows. Produces ATP from ADP in the presence of a proton gradient across the membrane. The polypeptide is V-type ATP synthase subunit D (Anaeromyxobacter dehalogenans (strain 2CP-1 / ATCC BAA-258)).